Reading from the N-terminus, the 220-residue chain is Mediator of RNA polymerase II transcription subunit 7 (220 aa).

It belongs to the Mediator complex subunit 7 family. In terms of assembly, component of the Mediator complex. Interacts with MED21.

It is found in the nucleus. Its function is as follows. Component of the Mediator complex, a coactivator involved in the regulated transcription of nearly all RNA polymerase II-dependent genes. Mediator functions as a bridge to convey information from gene-specific regulatory proteins to the basal RNA polymerase II transcription machinery. Mediator is recruited to promoters by direct interactions with regulatory proteins and serves as a scaffold for the assembly of a functional preinitiation complex with RNA polymerase II and the general transcription factors. Required for activated transcription of the MtnA, MtnB and MtnD genes. This is Mediator of RNA polymerase II transcription subunit 7 (MED7) from Drosophila melanogaster (Fruit fly).